A 590-amino-acid chain; its full sequence is MNIFTEFHARIAAILRGIIGSGRLPEDLDLTRFVVEPPREAAHGDLAANAAMVYAKEAKPAFANPRQLAVEIAVALAEDGDVAEAEVAGPGFINIRLKPEFFGRLLGAALEQGSDFGRPATAAQEKINVEYVSANPTGPMHVGHGRGAVFGDALANLLAFAGFGVTREYYINDAGAQVDVLARSAHLRYREALGETIGAIPEGLYPGDYLKSVGASLAQAHGDTYRGSNGEEWLEIFRLAAIDGMMAMIRDDLAALNITHEVFFSERSLTRSEDGDQVAAAIAFLRDRGLVYEGRLPPPKGQAIEDWEDREQVLFKSTDFGDDVDRPLKKSDGTYTYFASDIAYHKTKIDRGYSVLIDVWGADHGGYVKRMAAAVKALSEGRVTLDVKLCQLVKLMRGGEPVKMSKRAGDFVTLREVVDEVGVDAVRFMMLFRKNDAVLEFDLAKVIEQSKDNPVFYVQYAHARVKSVFRQAATLLPDLDCSLAALKTADFSLLGDEGEARLIKIIAQFPRVVEGAALAHEPHRIAFYLHDLASELHAHWTRGKDQPHLRFIYEERRDLTLARLALVHIMAEVLASGLSLLGVSAPSEMR.

The 'HIGH' region motif lies at 134–144 (ANPTGPMHVGH).

Belongs to the class-I aminoacyl-tRNA synthetase family. As to quaternary structure, monomer.

It localises to the cytoplasm. It carries out the reaction tRNA(Arg) + L-arginine + ATP = L-arginyl-tRNA(Arg) + AMP + diphosphate. The protein is Arginine--tRNA ligase of Beijerinckia indica subsp. indica (strain ATCC 9039 / DSM 1715 / NCIMB 8712).